We begin with the raw amino-acid sequence, 413 residues long: Falstatin (413 aa).

Positions 1–21 are cleaved as a signal peptide; it reads MNLLVFFCFFLLSCIVHLSRC. The BC loop; binds and inhibits the active site cavity of cysteine proteases signature appears at 284 to 294; the sequence is LDSVNGNGFVW. Polar residues-rich tracts occupy residues 325–339 and 346–360; these read ISVTNPVPIPKNSNT and NNKQDGSQNNTTTNH. Positions 325-367 are disordered; it reads ISVTNPVPIPKNSNTNKDDSINNKQDGSQNNTTTNHFPKPREQ.

It belongs to the protease inhibitor I71 family. Oligomer; probably composed of 10 monomers. Proteolytically cleaved.

It is found in the secreted. The protein resides in the cytoplasmic vesicle. It localises to the secretory vesicle. The protein localises to the microneme. Its subcellular location is the parasitophorous vacuole lumen. It is found in the host cytoplasm. In terms of biological role, cysteine protease inhibitor. Inhibits cysteine protease falcipains FP2 and FP3. Required for the invasion of host erythrocytes by merozoites. In the mosquito vector, essential for the gliding motility of hemocoel sporozoites and, therefore, for salivary gland invasion and the subsequent transmission from the mosquito to the mammalian host. Required for the invasion of host hepatocytes. During the liver stage, may prevent host hepatocyte cell death likely by inhibiting host cysteine proteases. This chain is Falstatin, found in Plasmodium falciparum (isolate 3D7).